Reading from the N-terminus, the 174-residue chain is UPF0316 protein lwe1794 (174 aa).

The next 3 helical transmembrane spans lie at Gly4–Val24, Leu36–Leu56, and Ile62–Ile82.

Belongs to the UPF0316 family.

It is found in the cell membrane. The protein is UPF0316 protein lwe1794 of Listeria welshimeri serovar 6b (strain ATCC 35897 / DSM 20650 / CCUG 15529 / CIP 8149 / NCTC 11857 / SLCC 5334 / V8).